Reading from the N-terminus, the 1055-residue chain is Protein SUPPRESSOR OF QUENCHING 1, chloroplastic (1055 aa).

Residues 1–56 (MALKLTSPPSVFSQSRRLSSSSLIPIRSKSTFTGFRSRTGVYLSKTTALQSSTKLS) constitute a chloroplast transit peptide. Val57 carries the N-acetylvaline modification. Residues 59–327 (AESPAATIAT…FQGSRRDILR (269 aa)) are Stromal-facing. Catalysis depends on Asp80, which acts as the Nucleophile. The Mg(2+) site is built by Asp80 and Asp82. Asp80 contributes to the substrate binding site. The Proton donor role is filled by Asp82. Residues Glu89, 118-122 (TGEAK), 141-144 (AKER), and 183-189 (SSADRIK) each bind substrate. Asp242 lines the Mg(2+) pocket. The helical transmembrane segment at 328–345 (YGSLGIALSCVYFAATNW) threads the bilayer. Over 346–1055 (KAMQYASPKA…AGGLQLQGTR (710 aa)) the chain is Lumenal. A Thioredoxin domain is found at 359-536 (ALVGAKSPSF…LDDVVAAALT (178 aa)). Cys431 and Cys434 are disulfide-bonded. NHL repeat units follow at residues 565 to 597 (PLKF…TDLE), 611 to 647 (GFQD…NHAL), 673 to 712 (GRKG…YSVL), 802 to 832 (LQHP…LDPV), and 854 to 887 (GAQL…IDLN).

This sequence in the N-terminal section; belongs to the HAD-like hydrolase superfamily. In the C-terminal section; belongs to the thioredoxin family. It depends on Mg(2+) as a cofactor.

It is found in the plastid. Its subcellular location is the chloroplast thylakoid membrane. Functionally, required to maintain light harvesting efficiency, especially during nonphotochemical quenching (NPQ) recovery, via the regulation of chlorophyll excited-state lifetime probably by preventing the formation of a slowly reversible form of antenna quenching. This chain is Protein SUPPRESSOR OF QUENCHING 1, chloroplastic, found in Arabidopsis thaliana (Mouse-ear cress).